The primary structure comprises 471 residues: Alpha-galactosidase 1 (471 aa).

Positions 1-18 (MFAFYFLTACISLKGVFG) are cleaved as a signal peptide. Cys-42 and Cys-74 are disulfide-bonded. Residues Asp-72 and Asp-73 each contribute to the substrate site. Residue Asn-105 is glycosylated (N-linked (GlcNAc...) asparagine). An intrachain disulfide couples Cys-121 to Cys-151. Lys-147 contributes to the substrate binding site. Asp-149 acts as the Nucleophile in catalysis. An N-linked (GlcNAc...) asparagine glycan is attached at Asn-175. Substrate is bound at residue Arg-205. Asp-209 functions as the Proton donor in the catalytic mechanism. Disulfide bonds link Cys-221/Cys-237 and Cys-223/Cys-230. Gln-251 contacts substrate. 7 N-linked (GlcNAc...) asparagine glycosylation sites follow: Asn-270, Asn-370, Asn-403, Asn-413, Asn-422, Asn-435, and Asn-454.

This sequence belongs to the glycosyl hydrolase 27 family. In terms of assembly, homotetramer.

Its subcellular location is the secreted. It catalyses the reaction Hydrolysis of terminal, non-reducing alpha-D-galactose residues in alpha-D-galactosides, including galactose oligosaccharides, galactomannans and galactolipids.. In Saccharomyces cerevisiae (Baker's yeast), this protein is Alpha-galactosidase 1 (MEL1).